The chain runs to 34 residues: Jingzhaotoxin F7-10.36 (34 aa).

Cystine bridges form between cysteine 2–cysteine 17, cysteine 9–cysteine 22, and cysteine 16–cysteine 29.

Belongs to the neurotoxin 10 (Hwtx-1) family. 50 (Jztz-F7) subfamily. As to expression, expressed by the venom gland.

It localises to the secreted. In terms of biological role, probable ion channel inhibitor. The protein is Jingzhaotoxin F7-10.36 of Chilobrachys guangxiensis (Chinese earth tiger tarantula).